A 102-amino-acid polypeptide reads, in one-letter code: Large ribosomal subunit protein bL21 (102 aa).

Positions lysine 77 to histidine 88 are enriched in basic residues. Positions lysine 77–alanine 102 are disordered. A compositionally biased stretch (polar residues) spans threonine 93 to alanine 102.

Belongs to the bacterial ribosomal protein bL21 family. As to quaternary structure, part of the 50S ribosomal subunit. Contacts protein L20.

This protein binds to 23S rRNA in the presence of protein L20. This chain is Large ribosomal subunit protein bL21, found in Limosilactobacillus reuteri (strain DSM 20016) (Lactobacillus reuteri).